Here is a 328-residue protein sequence, read N- to C-terminus: GTPase Obg (328 aa).

One can recognise an Obg domain in the interval 2-160 (YNFKDSVNIT…LSVRLELFLV (159 aa)). Positions 161–326 (ADIGLVGLPN…LIKEFFILAK (166 aa)) constitute an OBG-type G domain. GTP is bound by residues 167–174 (GLPNAGKS), 192–196 (FTTKI), 213–216 (DIPG), 280–283 (NKLD), and 307–309 (SIY). Positions 174 and 194 each coordinate Mg(2+).

It belongs to the TRAFAC class OBG-HflX-like GTPase superfamily. OBG GTPase family. As to quaternary structure, monomer. The cofactor is Mg(2+).

Its subcellular location is the cytoplasm. In terms of biological role, an essential GTPase which binds GTP, GDP and possibly (p)ppGpp with moderate affinity, with high nucleotide exchange rates and a fairly low GTP hydrolysis rate. Plays a role in control of the cell cycle, stress response, ribosome biogenesis and in those bacteria that undergo differentiation, in morphogenesis control. The sequence is that of GTPase Obg from Borreliella burgdorferi (strain ATCC 35210 / DSM 4680 / CIP 102532 / B31) (Borrelia burgdorferi).